Here is a 576-residue protein sequence, read N- to C-terminus: MQLLAQTCEAIAATSKKTEKIAIVATYLQSRTVPEAALSTLFLSGRTFAAHEERTLQVGGSILWRVVGELSGASEAKMTAAYKRHGDLGDATLGVLRGVAPEESTLTLKEVDYMFQQIAAVSGPAAKSRLIVTLLARATAPEAKYLVKFITGELRIGLKESQVEEAIAKAYGRELAEVRRANMLVGDIGETLVLAAHDKLATARMRLFHPMGFMLATPAESANEAFAEFEHAIVEDKYDGIRAQAHISRDKVRIFSRTLDDITDSFPELIPALKAIEHEVILDGEILAWRCGQALAFSELQKRLGRKNVSAAMQREVPVSYVTFDLLYAKGQLVIDRPLQERAAMLDGIFSEGAPRLVNVDPHGQASLMFAEVTPEQRVLRAPQARADSPEELDRLFAAAQERGNEGLMIKDIHSAYAVGRRGKSWLKLKRELAMLDVVVTAVELGHGKRAGILSDYTFAVRGGEELLNIGKAYSGLTDKEIAEMDEWFRAHTLVDHGFVREVEPKIVIEVAFNAVMKSDRHASGFALRFPRILRIRDDKGGEEIDTLERAEEIYRSQFHQRTRRIHRGDTKAQSS.

E235 provides a ligand contact to ATP. Residue K237 is the N6-AMP-lysine intermediate of the active site. ATP contacts are provided by R242, R257, E285, F324, R422, and K428.

This sequence belongs to the ATP-dependent DNA ligase family. Requires Mg(2+) as cofactor.

It catalyses the reaction ATP + (deoxyribonucleotide)n-3'-hydroxyl + 5'-phospho-(deoxyribonucleotide)m = (deoxyribonucleotide)n+m + AMP + diphosphate.. In terms of biological role, DNA ligase that seals nicks in double-stranded DNA during DNA replication, DNA recombination and DNA repair. The polypeptide is Probable DNA ligase (Koribacter versatilis (strain Ellin345)).